The sequence spans 391 residues: Dual-specificity RNA methyltransferase RlmN (391 aa).

The tract at residues 1–20 is disordered; the sequence is MTSVVADSLTETKTDSQKPI. Basic and acidic residues predominate over residues 10 to 20; sequence TETKTDSQKPI. Glutamate 120 functions as the Proton acceptor in the catalytic mechanism. The region spanning 126–366 is the Radical SAM core domain; the sequence is DADRGTLCIS…APVRRTRGQD (241 aa). A disulfide bridge connects residues cysteine 133 and cysteine 371. Residues cysteine 140, cysteine 144, and cysteine 147 each coordinate [4Fe-4S] cluster. S-adenosyl-L-methionine-binding positions include 195-196, serine 227, 249-251, and asparagine 328; these read GE and SLH. Residue cysteine 371 is the S-methylcysteine intermediate of the active site.

It belongs to the radical SAM superfamily. RlmN family. It depends on [4Fe-4S] cluster as a cofactor.

It is found in the cytoplasm. It carries out the reaction adenosine(2503) in 23S rRNA + 2 reduced [2Fe-2S]-[ferredoxin] + 2 S-adenosyl-L-methionine = 2-methyladenosine(2503) in 23S rRNA + 5'-deoxyadenosine + L-methionine + 2 oxidized [2Fe-2S]-[ferredoxin] + S-adenosyl-L-homocysteine. The enzyme catalyses adenosine(37) in tRNA + 2 reduced [2Fe-2S]-[ferredoxin] + 2 S-adenosyl-L-methionine = 2-methyladenosine(37) in tRNA + 5'-deoxyadenosine + L-methionine + 2 oxidized [2Fe-2S]-[ferredoxin] + S-adenosyl-L-homocysteine. Functionally, specifically methylates position 2 of adenine 2503 in 23S rRNA and position 2 of adenine 37 in tRNAs. m2A2503 modification seems to play a crucial role in the proofreading step occurring at the peptidyl transferase center and thus would serve to optimize ribosomal fidelity. The protein is Dual-specificity RNA methyltransferase RlmN of Zymomonas mobilis subsp. mobilis (strain ATCC 31821 / ZM4 / CP4).